A 612-amino-acid chain; its full sequence is Zinc metalloproteinase-disintegrin-like HV1 (612 aa).

Positions 1–20 (MIQVLLVTICLAVFPYQGSS) are cleaved as a signal peptide. The propeptide occupies 21-188 (IILESGNVND…SIKEDSQSNL (168 aa)). Residues 200–396 (KYVKFFLVAD…NMPQCILKKP (197 aa)) enclose the Peptidase M12B domain. N-linked (GlcNAc...) asparagine glycosylation occurs at asparagine 219. Cystine bridges form between cysteine 311–cysteine 391, cysteine 351–cysteine 375, and cysteine 353–cysteine 358. Histidine 336 provides a ligand contact to Zn(2+). Residue glutamate 337 is part of the active site. The Zn(2+) site is built by histidine 340 and histidine 346. One can recognise a Disintegrin domain in the interval 404–489 (PPVCGNYFVE…AECTDRFQRN (86 aa)). Residues valine 406, asparagine 409, phenylalanine 411, glutamate 413, glutamate 416, and aspartate 419 each contribute to the Ca(2+) site. Disulfide bonds link cysteine 407–cysteine 436, cysteine 418–cysteine 431, cysteine 420–cysteine 426, cysteine 430–cysteine 453, cysteine 444–cysteine 450, cysteine 449–cysteine 475, cysteine 462–cysteine 482, cysteine 469–cysteine 500, cysteine 493–cysteine 505, cysteine 512–cysteine 562, cysteine 527–cysteine 573, cysteine 540–cysteine 550, cysteine 557–cysteine 599, and cysteine 593–cysteine 605. The short motif at 468-470 (ECD) is the D/ECD-tripeptide element. Ca(2+) contacts are provided by aspartate 470, methionine 471, aspartate 473, aspartate 484, and arginine 485. A glycan (N-linked (GlcNAc...) asparagine) is linked at asparagine 502. N-linked (GlcNAc...) asparagine glycosylation is present at asparagine 609.

It belongs to the venom metalloproteinase (M12B) family. P-III subfamily. P-IIIc sub-subfamily. As to quaternary structure, homodimer; disulfide-linked. It depends on Zn(2+) as a cofactor. As to expression, expressed by the venom gland.

The protein resides in the secreted. Its activity is regulated as follows. Inhibited by EDTA and EGTA. In terms of biological role, snake venom zinc metalloproteinase-disintegrin-like that potently activates prothrombin (F2). Does not elicit any hemorrhagic response. Barely inhibits collagen-induced platelet aggregation. Hydrolyzes the alpha-chain of fibrin and fibrinogen (FGA), without affecting the Bbeta- and gamma-chains. Induces apoptosis in cultured vascular endothelial cells. The chain is Zinc metalloproteinase-disintegrin-like HV1 from Protobothrops flavoviridis (Habu).